A 193-amino-acid polypeptide reads, in one-letter code: Ion-translocating oxidoreductase complex subunit A (193 aa).

The next 6 membrane-spanning stretches (helical) occupy residues 5-25, 39-59, 62-82, 102-122, 134-154, and 171-191; these read LLLFVGTVLVNNFVLVKFLGL, IGMGFATTFVMTIASISSWLM, FILVPLDLLYLRTLSFILVIA, LLGIFLPLITTNCAVLGVALL, AVYGFGAAVGFSLVMVLFAAI, and SIGLITAGLMSLAFMGFSGLV.

It belongs to the NqrDE/RnfAE family. As to quaternary structure, the complex is composed of six subunits: RnfA, RnfB, RnfC, RnfD, RnfE and RnfG.

It is found in the cell inner membrane. Functionally, part of a membrane-bound complex that couples electron transfer with translocation of ions across the membrane. The sequence is that of Ion-translocating oxidoreductase complex subunit A from Proteus mirabilis (strain HI4320).